The sequence spans 448 residues: Cysteine--tRNA ligase (448 aa).

Zn(2+) is bound at residue C29. The 'HIGH' region motif lies at 31–41 (PTVYNYIHIGN). Residues C212, H237, and E241 each coordinate Zn(2+). Residues 269–273 (KMSKS) carry the 'KMSKS' region motif. K272 contributes to the ATP binding site.

The protein belongs to the class-I aminoacyl-tRNA synthetase family. As to quaternary structure, monomer. The cofactor is Zn(2+).

The protein resides in the cytoplasm. It catalyses the reaction tRNA(Cys) + L-cysteine + ATP = L-cysteinyl-tRNA(Cys) + AMP + diphosphate. The sequence is that of Cysteine--tRNA ligase from Streptococcus equi subsp. zooepidemicus (strain MGCS10565).